The primary structure comprises 402 residues: Multidrug resistance protein MdtH (402 aa).

The Cytoplasmic portion of the chain corresponds to 1-12 (MSRVSQARNLGK). Residues 13–33 (YFLLIDNMLVVLGFFVVFPLI) traverse the membrane as a helical segment. At 34–98 (SIRFVDQMGW…GFATMGIAHE (65 aa)) the chain is on the periplasmic side. The helical transmembrane segment at 99–116 (PWLLWFSCFLSGLGGTLF) threads the bilayer. Topologically, residues 117–138 (DPPRSALVVKLIRPEQRGRFFS) are cytoplasmic. Residues 139–159 (LLMMQDSAGAVIGALLGSWLL) form a helical membrane-spanning segment. The Periplasmic segment spans residues 160 to 164 (QYDFR). Residues 165–185 (LVCATGAILFILCALFNAWLL) form a helical membrane-spanning segment. Residues 186-213 (PAWKLSTARTPVREGMRRVMSNKRFVTY) are Cytoplasmic-facing. The chain crosses the membrane as a helical span at residues 214–234 (VLTLAGYYMLAVQVMLMLPIM). The Periplasmic portion of the chain corresponds to 235-243 (VNDIAGSPA). A helical transmembrane segment spans residues 244 to 264 (AVKWMYAIEACLSLTLLYPIA). The Cytoplasmic segment spans residues 265–276 (RWSEKRFRLEHR). A helical transmembrane segment spans residues 277 to 297 (LMAGLLVMSLSMLPIGMVGNL). Over 298 to 299 (QQ) the chain is Periplasmic. The chain crosses the membrane as a helical span at residues 300 to 320 (LFTLICAFYIGSVIAEPARET). At 321–339 (LSASPADARARGSYMGFSR) the chain is on the cytoplasmic side. A helical transmembrane segment spans residues 340–360 (LGLAIGGAISYIGGGWLFDMG). Residues 361–367 (KALAQPE) lie on the Periplasmic side of the membrane. The helical transmembrane segment at 368 to 388 (LPWMMLGIIGFITFLALGWQF) threads the bilayer. At 389-402 (SHKRTPRRMLEPGA) the chain is on the cytoplasmic side.

Belongs to the major facilitator superfamily. DHA1 family. MdtH (TC 2.A.1.2.21) subfamily.

The protein resides in the cell inner membrane. The chain is Multidrug resistance protein MdtH from Salmonella typhi.